The sequence spans 148 residues: Nucleoside diphosphate kinase A (148 aa).

Lysine 9, phenylalanine 57, arginine 85, threonine 91, arginine 102, and asparagine 112 together coordinate ATP. The active-site Pros-phosphohistidine intermediate is histidine 115.

The protein belongs to the NDK family. Mg(2+) is required as a cofactor.

The enzyme catalyses a 2'-deoxyribonucleoside 5'-diphosphate + ATP = a 2'-deoxyribonucleoside 5'-triphosphate + ADP. It catalyses the reaction a ribonucleoside 5'-diphosphate + ATP = a ribonucleoside 5'-triphosphate + ADP. Major role in the synthesis of nucleoside triphosphates other than ATP. The ATP gamma phosphate is transferred to the NDP beta phosphate via a ping-pong mechanism, using a phosphorylated active-site intermediate. The chain is Nucleoside diphosphate kinase A from Flaveria bidentis (Coastal plain yellowtops).